Here is a 624-residue protein sequence, read N- to C-terminus: Bifunctional 3'-phosphoadenosine 5'-phosphosulfate synthase 1 (624 aa).

The residue at position 1 (M1) is an N-acetylmethionine. Residues 1–225 form an adenylyl-sulfate kinase region; that stretch reads MEIPGSLCKK…VVELLQERDI (225 aa). Residue K12 is modified to N6-acetyllysine. Residue 62-67 coordinates ATP; that stretch reads GAGKTT. Adenosine 5'-phosphosulfate is bound by residues 89-92, F101, 106-109, 132-133, K171, and 184-185; these read DNIR, REEN, IS, and GF. ATP is bound by residues C207, C212, 419–422, 521–525, and A563; these read QLRN and GRDPA. The segment at 234 to 624 is sulfate adenylyltransferase; that stretch reads VKELYVPENK…VEYYKSLEKA (391 aa).

In the N-terminal section; belongs to the APS kinase family. It in the C-terminal section; belongs to the sulfate adenylyltransferase family. Homodimer. As to expression, expressed in the neonatal brain and in cartilage.

The catalysed reaction is sulfate + ATP + H(+) = adenosine 5'-phosphosulfate + diphosphate. It catalyses the reaction adenosine 5'-phosphosulfate + ATP = 3'-phosphoadenylyl sulfate + ADP + H(+). The protein operates within sulfur metabolism; sulfate assimilation. Its function is as follows. Bifunctional enzyme with both ATP sulfurylase and APS kinase activity, which mediates two steps in the sulfate activation pathway. The first step is the transfer of a sulfate group to ATP to yield adenosine 5'-phosphosulfate (APS), and the second step is the transfer of a phosphate group from ATP to APS yielding 3'-phosphoadenylylsulfate (PAPS: activated sulfate donor used by sulfotransferase). In mammals, PAPS is the sole source of sulfate; APS appears to be only an intermediate in the sulfate-activation pathway. Required for normal biosynthesis of sulfated L-selectin ligands in endothelial cells. This Mus musculus (Mouse) protein is Bifunctional 3'-phosphoadenosine 5'-phosphosulfate synthase 1 (Papss1).